A 355-amino-acid chain; its full sequence is Tabersonine 16-O-methyltransferase (355 aa).

S-adenosyl-L-methionine-binding positions include 198-201 (IGGG), Asp222, 222-223 (DL), 242-243 (DM), and Lys256. His260 acts as the Proton acceptor in catalysis.

Belongs to the class I-like SAM-binding methyltransferase superfamily. Cation-independent O-methyltransferase family. COMT subfamily. As to quaternary structure, homodimer. As to expression, expressed in leaves and flowers. Detected in stems and roots. In leaves, expressed in epidermal cells.

Its subcellular location is the cytoplasm. The catalysed reaction is 16-hydroxytabersonine + S-adenosyl-L-methionine = 16-methoxytabersonine + S-adenosyl-L-homocysteine + H(+). The protein operates within alkaloid biosynthesis; vindoline biosynthesis. 16-O-methyltransferase involved in the biosynthesis of vindoline. Highly specific for 16-hydroxytabersonine. No activity with tabersonine, 3-hydroxytyramine, 4-hydroxytyramine, 5-hydroxytryptamine (5HT), 2,3-dihydro-3-hydroxytabersonine, lochnericine, hoerhammericine, 16-hydroxy-2,3-dihydro-3-hydroxytabersonine, 16-hydroxylochnericine, 16-hydroxyhoerhammericine, quercetin, kaempferol and caffeic acid as substrates. The protein is Tabersonine 16-O-methyltransferase of Catharanthus roseus (Madagascar periwinkle).